Reading from the N-terminus, the 199-residue chain is Hematopoietic prostaglandin D synthase (199 aa).

One can recognise a GST N-terminal domain in the interval 2 to 79 (PNYKLLYFNM…YLTKNTDLAG (78 aa)). Residues tyrosine 8, arginine 14, tryptophan 39, 49 to 51 (GKI), and 63 to 64 (QS) each bind glutathione. The GST C-terminal domain occupies 81–199 (TALEQCQADA…WILKRPQTKL (119 aa)).

The protein belongs to the GST superfamily. Sigma family. Homodimer. It depends on glutathione as a cofactor. Expressed in skin and oviduct.

It is found in the cytoplasm. It catalyses the reaction prostaglandin H2 = prostaglandin D2. The enzyme catalyses RX + glutathione = an S-substituted glutathione + a halide anion + H(+). It carries out the reaction 2-glyceryl-prostaglandin H2 = 2-glyceryl-prostaglandin D2. In terms of biological role, bifunctional enzyme which catalyzes both the conversion of PGH2 to PGD2, a prostaglandin involved in smooth muscle contraction/relaxation and a potent inhibitor of platelet aggregation, and the conjugation of glutathione with a wide range of aryl halides and organic isothiocyanates. Also exhibits low glutathione-peroxidase activity. This Mus musculus (Mouse) protein is Hematopoietic prostaglandin D synthase.